The primary structure comprises 122 residues: Large ribosomal subunit protein uL14 (122 aa).

Belongs to the universal ribosomal protein uL14 family. In terms of assembly, part of the 50S ribosomal subunit. Forms a cluster with proteins L3 and L19. In the 70S ribosome, L14 and L19 interact and together make contacts with the 16S rRNA in bridges B5 and B8.

Binds to 23S rRNA. Forms part of two intersubunit bridges in the 70S ribosome. This Acidovorax sp. (strain JS42) protein is Large ribosomal subunit protein uL14.